The chain runs to 156 residues: Small ribosomal subunit protein uS7 (156 aa).

It belongs to the universal ribosomal protein uS7 family. Part of the 30S ribosomal subunit. Contacts proteins S9 and S11.

One of the primary rRNA binding proteins, it binds directly to 16S rRNA where it nucleates assembly of the head domain of the 30S subunit. Is located at the subunit interface close to the decoding center, probably blocks exit of the E-site tRNA. The polypeptide is Small ribosomal subunit protein uS7 (Nostoc punctiforme (strain ATCC 29133 / PCC 73102)).